A 393-amino-acid chain; its full sequence is uncharacterized protein (393 aa).

[4Fe-4S] cluster-binding residues include cysteine 72, cysteine 82, cysteine 85, and cysteine 160. S-adenosyl-L-methionine is bound by residues glutamine 215, phenylalanine 245, glutamate 267, and aspartate 313. The Nucleophile role is filled by cysteine 340.

The protein belongs to the class I-like SAM-binding methyltransferase superfamily. RNA M5U methyltransferase family.

This is an uncharacterized protein from Nitrosomonas europaea (strain ATCC 19718 / CIP 103999 / KCTC 2705 / NBRC 14298).